An 86-amino-acid chain; its full sequence is Kappa-theraphotoxin-Cg1a 4 (86 aa).

A signal peptide spans 1-21 (MKASVLITLAVLGVMFVWASA). Positions 22–50 (AELEERGSDQRDSPAWLKSMERIFQSEER) are excised as a propeptide. Intrachain disulfides connect cysteine 52–cysteine 66, cysteine 59–cysteine 71, and cysteine 65–cysteine 78. Residue phenylalanine 84 is modified to Phenylalanine amide.

This sequence belongs to the neurotoxin 10 (Hwtx-1) family. 28 (Jztx-11) subfamily. As to expression, expressed by the venom gland.

The protein localises to the secreted. This toxin acts as a voltage-dependent gating-modifier. It inhibits the sodium conductance (IC(50)=124 nM) and slows the fast inactivation (EC(50)=1180 nM) of Nav1.5/SCN5A. It significantly shifts the activation to more depolarized voltages and decreases the deactivation of Nav1.5 currents upon extreme depolarization, but only slightly affects voltage-dependence of steady-state inactivation. In addition, this toxin causes an approximately five-fold decrease in the rate of recovery from inactivation and an approximately 1.9-fold reduction in the closed-state inactivation rate. This toxin integrates the functions of site 3 toxins (alpha-scorpion toxins) with site 4 toxins (beta-scorpion and spider toxins) by targeting multiple sites on Nav1.5. Also shows inhibition of voltage-gated potassium channels (5 uM completely inhibits Kv2.1/KCNB1, whereas 5 uM moderately inhibits Kv4.2/KCND2 Kv4.1/KCND1 channels). This Chilobrachys guangxiensis (Chinese earth tiger tarantula) protein is Kappa-theraphotoxin-Cg1a 4.